We begin with the raw amino-acid sequence, 304 residues long: Small ribosomal subunit protein uS3 (304 aa).

The region spanning 17–86 is the KH type-2 domain; sequence MDEYFAKQLS…NPQIDAQEVK (70 aa).

Belongs to the universal ribosomal protein uS3 family. Part of the 30S ribosomal subunit.

In terms of biological role, binds the lower part of the 30S subunit head. The polypeptide is Small ribosomal subunit protein uS3 (Methanococcoides burtonii (strain DSM 6242 / NBRC 107633 / OCM 468 / ACE-M)).